A 730-amino-acid polypeptide reads, in one-letter code: Acetylene hydratase (730 aa).

[4Fe-4S] cluster-binding residues include cysteine 9 and cysteine 12. Aspartate 13 is a catalytic residue. [4Fe-4S] cluster contacts are provided by cysteine 16 and cysteine 46. W-bis(molybdopterin guanine dinucleotide) contacts are provided by residues lysine 48, 111–114, cysteine 141, 172–173, 177–179, 199–202, 218–221, serine 296, glutamine 300, 416–418, 422–423, 442–444, aspartate 460, arginine 465, 602–613, arginine 606, histidine 676, aspartate 699, and arginine 720; these read TEIN, KN, HNW, LDPR, YGTD, ASN, GY, YDQ, and FAGLREDSNFQS.

Belongs to the prokaryotic molybdopterin-containing oxidoreductase family. In terms of assembly, monomer. The cofactor is [4Fe-4S] cluster. It depends on W-bis(molybdopterin guanine dinucleotide) as a cofactor.

It catalyses the reaction acetaldehyde = acetylene + H2O. Its function is as follows. Catalyzes the hydration of acetylene to form acetaldehyde. Ethylene cannot act as a substrate. The chain is Acetylene hydratase from Syntrophotalea acetylenica (Pelobacter acetylenicus).